We begin with the raw amino-acid sequence, 171 residues long: Large ribosomal subunit protein bL9 (171 aa).

This sequence belongs to the bacterial ribosomal protein bL9 family.

Its function is as follows. Binds to the 23S rRNA. The sequence is that of Large ribosomal subunit protein bL9 from Rickettsia peacockii (strain Rustic).